An 836-amino-acid polypeptide reads, in one-letter code: Eukaryotic translation initiation factor 3 subunit C (836 aa).

The segment at 1–97 is disordered; the sequence is MSRFFVSGYD…RRVVKSAKEK (97 aa). Positions 13–55 are enriched in acidic residues; sequence SSSEEEDLLTSSEEELMSSEQESDSEFDDEFANDDDSDSSDSD. The segment covering 86–97 has biased composition (basic and acidic residues); it reads EGRRVVKSAKEK. The PCI domain occupies 586 to 761; the sequence is FHMHINLELL…KSINFVSSEH (176 aa). The tract at residues 783–817 is disordered; it reads DKNEKTASNGHGRKTTQQQQQQQQKEQREQTHDEN. Residues 797–806 are compositionally biased toward low complexity; it reads TTQQQQQQQQ. A compositionally biased stretch (basic and acidic residues) spans 807–817; the sequence is KEQREQTHDEN.

It belongs to the eIF-3 subunit C family. Component of the eukaryotic translation initiation factor 3 (eIF-3) complex.

Its subcellular location is the cytoplasm. Functionally, component of the eukaryotic translation initiation factor 3 (eIF-3) complex, which is involved in protein synthesis of a specialized repertoire of mRNAs and, together with other initiation factors, stimulates binding of mRNA and methionyl-tRNAi to the 40S ribosome. The eIF-3 complex specifically targets and initiates translation of a subset of mRNAs involved in cell proliferation. This is Eukaryotic translation initiation factor 3 subunit C from Meyerozyma guilliermondii (strain ATCC 6260 / CBS 566 / DSM 6381 / JCM 1539 / NBRC 10279 / NRRL Y-324) (Yeast).